Here is a 236-residue protein sequence, read N- to C-terminus: CHD1 helical C-terminal domain containing protein 1 (236 aa).

The tract at residues 1–29 is disordered; that stretch reads MEASDWQGGEGDKPLEKVGSVPCLERSSS. Residues 44–145 form a CHD1 helical C-terminal domain (CHCT) region; the sequence is LSQDTFKICK…TNQTAKFLAA (102 aa). A disordered region spans residues 197-236; the sequence is LEEPRSSHCSRGDSLRKLPQKPKLKKKRIKERLESPKSCS. Residues 198 to 212 show a composition bias toward basic and acidic residues; the sequence is EEPRSSHCSRGDSLR. A compositionally biased stretch (basic residues) spans 214 to 226; that stretch reads LPQKPKLKKKRIK. The span at 227-236 shows a compositional bias: basic and acidic residues; the sequence is ERLESPKSCS.

As to expression, exclusively expressed in testes.

Its subcellular location is the cytoplasm. The protein resides in the nucleus. In terms of biological role, may play a role in regulation of apoptosis. This Mus musculus (Mouse) protein is CHD1 helical C-terminal domain containing protein 1 (Chct1).